The chain runs to 86 residues: MNTKEPHKRVVQGKVISKFAEKSAVILVERKVVHKKYRKIVKKFKKYTIHDQDNQVKVGDFVSAIECKPLSKTKSFTLKEILVVGV.

This sequence belongs to the universal ribosomal protein uS17 family. In terms of assembly, part of the 30S ribosomal subunit.

In terms of biological role, one of the primary rRNA binding proteins, it binds specifically to the 5'-end of 16S ribosomal RNA. The sequence is that of Small ribosomal subunit protein uS17 from Helicobacter acinonychis (strain Sheeba).